The following is a 464-amino-acid chain: Protein FAM90A23 (464 aa).

Disordered stretches follow at residues 1-42 (MMAR…DPRL), 69-389 (VPAT…HDGA), and 415-437 (HSPE…SEAP). 2 stretches are compositionally biased toward basic and acidic residues: residues 74–89 (GKKE…KPRA) and 97–114 (NKDK…DPQR). Over residues 180–197 (LASLSPLRKASLSSSSSL) the composition is skewed to low complexity.

It belongs to the FAM90 family.

The polypeptide is Protein FAM90A23 (Homo sapiens (Human)).